Here is a 236-residue protein sequence, read N- to C-terminus: Ribonuclease 3 (236 aa).

Residues 8 to 130 (FRRLSQALDY…TFAAVSFDAD (123 aa)) enclose the RNase III domain. Residue E43 participates in Mg(2+) binding. The active site involves D47. Mg(2+) contacts are provided by D116 and E119. Residue E119 is part of the active site. Residues 157–227 (DAKTRLQEAL…AEAALTLLEQ (71 aa)) form the DRBM domain.

Belongs to the ribonuclease III family. Homodimer. The cofactor is Mg(2+).

Its subcellular location is the cytoplasm. It carries out the reaction Endonucleolytic cleavage to 5'-phosphomonoester.. Functionally, digests double-stranded RNA. Involved in the processing of primary rRNA transcript to yield the immediate precursors to the large and small rRNAs (23S and 16S). Processes some mRNAs, and tRNAs when they are encoded in the rRNA operon. Processes pre-crRNA and tracrRNA of type II CRISPR loci if present in the organism. In Chromobacterium violaceum (strain ATCC 12472 / DSM 30191 / JCM 1249 / CCUG 213 / NBRC 12614 / NCIMB 9131 / NCTC 9757 / MK), this protein is Ribonuclease 3.